Here is a 154-residue protein sequence, read N- to C-terminus: Leghemoglobin-1 (154 aa).

Residues Val-3–Lys-151 enclose the Globin domain. Ser-46 contacts heme b. The residue at position 46 (Ser-46) is a Phosphoserine. His-64 contributes to the O2 binding site. The heme b site is built by Lys-67, His-98, and Lys-101. Tyr-139 is modified (nitrated tyrosine).

This sequence belongs to the plant globin family. In terms of assembly, monomer. In terms of processing, nitrated in effective nodules and particularly in hypoxic conditions; this mechanism may play a protective role in the symbiosis by buffering toxic peroxynitrite NO(2)(-). Nitration level decrease during nodule senescence. Post-translationally, phosphorylation at Ser-46 disrupts the molecular environment of its porphyrin ring oxygen binding pocket, thus leading to a reduced oxygen consumption and to the delivery of oxygen O(2) to symbiosomes. As to expression, accumulates in developing root nodules and present in roots, especially in the upper part. Detected in leaves at low levels.

It localises to the cytoplasm. Its subcellular location is the cytosol. The protein resides in the nucleus. Its function is as follows. Leghemoglobin that reversibly binds oxygen O(2) through a pentacoordinated heme iron. In root nodules, facilitates the diffusion of oxygen to the bacteroids while preventing the bacterial nitrogenase from being inactivated by buffering dioxygen, nitric oxide and carbon monoxide, and promoting the formation of reactive oxygen species (ROS, e.g. H(2)O(2)). This role is essential for symbiotic nitrogen fixation (SNF). The polypeptide is Leghemoglobin-1 (Lupinus luteus (European yellow lupine)).